The following is a 589-amino-acid chain: Aspartate--tRNA ligase (589 aa).

E176 contacts L-aspartate. The interval 200 to 203 (QLFK) is aspartate. R222 lines the L-aspartate pocket. ATP is bound by residues 222–224 (RDE) and Q231. H449 serves as a coordination point for L-aspartate. E483 contributes to the ATP binding site. R490 contacts L-aspartate. 535 to 538 (GLDR) serves as a coordination point for ATP.

This sequence belongs to the class-II aminoacyl-tRNA synthetase family. Type 1 subfamily. Homodimer.

It is found in the cytoplasm. The catalysed reaction is tRNA(Asp) + L-aspartate + ATP = L-aspartyl-tRNA(Asp) + AMP + diphosphate. Its function is as follows. Catalyzes the attachment of L-aspartate to tRNA(Asp) in a two-step reaction: L-aspartate is first activated by ATP to form Asp-AMP and then transferred to the acceptor end of tRNA(Asp). This chain is Aspartate--tRNA ligase, found in Enterococcus faecalis (strain ATCC 700802 / V583).